The sequence spans 101 residues: Phosphoribosyl-AMP cyclohydrolase (101 aa).

A Mg(2+)-binding site is contributed by Asp-71. Position 72 (Cys-72) interacts with Zn(2+). 2 residues coordinate Mg(2+): Asp-73 and Asp-75. Residues Cys-88 and Cys-95 each coordinate Zn(2+).

This sequence belongs to the PRA-CH family. In terms of assembly, homodimer. Requires Mg(2+) as cofactor. The cofactor is Zn(2+).

Its subcellular location is the cytoplasm. The catalysed reaction is 1-(5-phospho-beta-D-ribosyl)-5'-AMP + H2O = 1-(5-phospho-beta-D-ribosyl)-5-[(5-phospho-beta-D-ribosylamino)methylideneamino]imidazole-4-carboxamide. Its pathway is amino-acid biosynthesis; L-histidine biosynthesis; L-histidine from 5-phospho-alpha-D-ribose 1-diphosphate: step 3/9. Functionally, catalyzes the hydrolysis of the adenine ring of phosphoribosyl-AMP. The protein is Phosphoribosyl-AMP cyclohydrolase of Bacillus cereus (strain ATCC 14579 / DSM 31 / CCUG 7414 / JCM 2152 / NBRC 15305 / NCIMB 9373 / NCTC 2599 / NRRL B-3711).